The following is a 350-amino-acid chain: tRNA uridine(34) hydroxylase (350 aa).

The 95-residue stretch at 146–240 (DDPDALFIDM…YARKAREQGL (95 aa)) folds into the Rhodanese domain. Cys-200 acts as the Cysteine persulfide intermediate in catalysis.

The protein belongs to the TrhO family.

The enzyme catalyses uridine(34) in tRNA + AH2 + O2 = 5-hydroxyuridine(34) in tRNA + A + H2O. In terms of biological role, catalyzes oxygen-dependent 5-hydroxyuridine (ho5U) modification at position 34 in tRNAs. The protein is tRNA uridine(34) hydroxylase of Shigella flexneri serotype 5b (strain 8401).